A 293-amino-acid chain; its full sequence is Elongation factor Ts (293 aa).

The involved in Mg(2+) ion dislocation from EF-Tu stretch occupies residues 80-83 (TDFV).

Belongs to the EF-Ts family.

The protein resides in the cytoplasm. Functionally, associates with the EF-Tu.GDP complex and induces the exchange of GDP to GTP. It remains bound to the aminoacyl-tRNA.EF-Tu.GTP complex up to the GTP hydrolysis stage on the ribosome. In Burkholderia multivorans (strain ATCC 17616 / 249), this protein is Elongation factor Ts.